The sequence spans 1131 residues: Phytochrome a (1131 aa).

Over residues 1 to 23 (MSSSRPAHSSSSSSRTRQSSQAR) the composition is skewed to low complexity. The disordered stretch occupies residues 1–26 (MSSSRPAHSSSSSSRTRQSSQARILA). The region spanning 219–404 (SMEALCNTVV…VFAVHVNKEF (186 aa)) is the GAF domain. Cysteine 324 lines the phytochromobilin pocket. PAS domains are found at residues 620 to 690 (VTSE…LQGK) and 750 to 834 (VEGD…LAGE). Residues 904–1124 (YMRHAINKPL…TFILTAELAA (221 aa)) enclose the Histidine kinase domain.

It belongs to the phytochrome family. As to quaternary structure, homodimer. In terms of processing, contains one covalently linked phytochromobilin chromophore.

Its function is as follows. Regulatory photoreceptor which exists in two forms that are reversibly interconvertible by light: the Pr form that absorbs maximally in the red region of the spectrum and the Pfr form that absorbs maximally in the far-red region. Photoconversion of Pr to Pfr induces an array of morphogenic responses, whereas reconversion of Pfr to Pr cancels the induction of those responses. Pfr controls the expression of a number of nuclear genes including those encoding the small subunit of ribulose-bisphosphate carboxylase, chlorophyll A/B binding protein, protochlorophyllide reductase, rRNA, etc. It also controls the expression of its own gene(s) in a negative feedback fashion. The chain is Phytochrome a (PHYA) from Sorghum bicolor (Sorghum).